We begin with the raw amino-acid sequence, 248 residues long: Small ribosomal subunit protein uS2 (248 aa).

It belongs to the universal ribosomal protein uS2 family.

The sequence is that of Small ribosomal subunit protein uS2 from Thiobacillus denitrificans (strain ATCC 25259 / T1).